A 202-amino-acid polypeptide reads, in one-letter code: Large ribosomal subunit protein uL4 (202 aa).

Residues 40–71 are disordered; the sequence is GRQGSKAQKTRSQVSGGGKKPWRQKGSGRARA. Positions 44–53 are enriched in polar residues; the sequence is SKAQKTRSQV.

Belongs to the universal ribosomal protein uL4 family. Part of the 50S ribosomal subunit.

One of the primary rRNA binding proteins, this protein initially binds near the 5'-end of the 23S rRNA. It is important during the early stages of 50S assembly. It makes multiple contacts with different domains of the 23S rRNA in the assembled 50S subunit and ribosome. Its function is as follows. Forms part of the polypeptide exit tunnel. The protein is Large ribosomal subunit protein uL4 of Hahella chejuensis (strain KCTC 2396).